A 1003-amino-acid chain; its full sequence is Anoctamin-2 (1003 aa).

The tract at residues 1 to 68 (MATPGPRDIP…PCGGESTRSS (68 aa)) is disordered. Topologically, residues 1-365 (MATPGPRDIP…FGEKIGLYFA (365 aa)) are cytoplasmic. The segment covering 10–21 (PLLPGSPRRLSP) has biased composition (low complexity). The helical transmembrane segment at 366–386 (WLGLYTSFLIPSSVIGVIVFL) threads the bilayer. The Extracellular segment spans residues 387–434 (YGCATIEEDIPSREMCDQQNAFTMCPLCDKSCDYWNLSSACGTAQASH). An N-linked (GlcNAc...) asparagine glycan is attached at asparagine 422. A helical transmembrane segment spans residues 435-455 (LFDNPATVFFSIFMALWATMF). Residues 456–538 (LENWKRLQMR…KDRFPGYLMN (83 aa)) lie on the Cytoplasmic side of the membrane. Residues 539–559 (FASILFMIALTFSIVFGVIVY) form a helical membrane-spanning segment. At 560–582 (RITTAAALSLNKATRSNVRVTVT) the chain is on the extracellular side. A helical membrane pass occupies residues 583-603 (ATAVIINLVVILILDEIYGAV). Topologically, residues 604 to 623 (AKWLTKIEVPKTEQTFEERL) are cytoplasmic. Residues 624 to 644 (ILKAFLLKFVNAYSPIFYVAF) traverse the membrane as a helical segment. At 645–748 (FKGRFVGRPG…YTGLTPEYME (104 aa)) the chain is on the extracellular side. Residues 749–769 (MIIQFGFVTLFVASFPLAPVF) form a helical membrane-spanning segment. The Cytoplasmic portion of the chain corresponds to 770–801 (ALLNNVIEVRLDAKKFVTELRRPDAVRTKDIG). The helical transmembrane segment at 802 to 822 (IWFDILSGIGKFSVISNAFVI) threads the bilayer. The Extracellular segment spans residues 823–907 (AITSDFIPRL…QYWFILSARL (85 aa)). Asparagine 841, asparagine 849, and asparagine 856 each carry an N-linked (GlcNAc...) asparagine glycan. A helical transmembrane segment spans residues 908 to 928 (AFVIIFQNLVMFLSVLVDWMI). The Cytoplasmic segment spans residues 929–1003 (PDIPTDISDQ…MSSGSQHTNV (75 aa)). A disordered region spans residues 961-1003 (MDEPALRSPGGGDRSRSRAASSAPSGQSQLGSMMSSGSQHTNV). Residues 978–1003 (RAASSAPSGQSQLGSMMSSGSQHTNV) are compositionally biased toward low complexity. The short motif at 1001-1003 (TNV) is the DLG4 binding (PDZ) element.

The protein belongs to the anoctamin family. Homodimer. Component of a presynaptic protein complex recruited to specialized plasma membrane domains of photoreceptors. Interacts with DLG4 by its C-terminal region. As to expression, retina, especially in the photoreceptor synaptic terminals.

The protein resides in the cell membrane. It carries out the reaction chloride(in) = chloride(out). Channel activity is repressed by chloride inhibitors; strongly by niflumic acid (NFA), partially by flufenamic acid (FFA), and only slightly by meclofenamic acid (MFA), 5-Nitro-2-(3-phenylpropylamino)benzoic acid (NPPB), 4-acetamido-4'-isothiocyanato-stilben-2,2'-disulfonate (SITS), and 4,4'-diisothiocyanatostilbene-2,2'-disulfonic acid (DIDS). In terms of biological role, calcium-activated chloride channel (CaCC) which may play a role in olfactory signal transduction. Odorant molecules bind to odor-sensing receptors (OSRs), leading to an increase in calcium entry that activates CaCC current which amplifies the depolarization of the OSR cells, ANO2 seems to be the underlying chloride channel involved in this process. May mediate light perception amplification in retina. The protein is Anoctamin-2 (ANO2) of Homo sapiens (Human).